A 226-amino-acid polypeptide reads, in one-letter code: Uridylate kinase (226 aa).

Lysine 6–lysine 10 contributes to the ATP binding site. Glycine 43 is a UMP binding site. Glycine 44 and arginine 48 together coordinate ATP. UMP-binding positions include aspartate 65 and phenylalanine 113–threonine 119. 4 residues coordinate ATP: threonine 139, asparagine 140, tyrosine 145, and aspartate 148.

This sequence belongs to the UMP kinase family. As to quaternary structure, homohexamer.

Its subcellular location is the cytoplasm. The enzyme catalyses UMP + ATP = UDP + ADP. The protein operates within pyrimidine metabolism; CTP biosynthesis via de novo pathway; UDP from UMP (UMPK route): step 1/1. Its activity is regulated as follows. Inhibited by UTP. Functionally, catalyzes the reversible phosphorylation of UMP to UDP. The sequence is that of Uridylate kinase from Saccharolobus islandicus (strain Y.N.15.51 / Yellowstone #2) (Sulfolobus islandicus).